Consider the following 962-residue polypeptide: Atromentin synthetase nps3 (962 aa).

The segment at 55–469 is adenylation (A) domain; it reads FISSSAHDSS…SGRIKDTVIV (415 aa). The Carrier domain maps to 601-679; it reads VPATITETAF…DLAKYIDALV (79 aa). The thiolation and peptide carrier (T) domain stretch occupies residues 606–676; sequence TETAFAKIFA…VLRDLAKYID (71 aa). O-(pantetheine 4'-phosphoryl)serine is present on serine 638. Residues 702–805 are thioesterase (TE) domain; that stretch reads PIFFVHPGVG…VGLINIPPHI (104 aa).

Belongs to the ATP-dependent AMP-binding enzyme family.

Its pathway is secondary metabolite biosynthesis. Functionally, an L-tyrosine:2-oxoglutarate aminotransferase (probably amt1) and atromentin synthetase nps3 catalyze consecutive steps to turn over L-tyrosine into atromentin, which represents the generic precursor molecule for the entire terphenylquinone and pulvinic acid family of pigments, which are widely distributed secondary metabolites in homobasidiomycetes. The first step catalyzed by the aminotransferase converts L-tyrosine in to 4-hydroxyphenylpyruvate (4-HPP). Adenylation of two 4-HPP monomers by the nps3 adenylation (A) domain, covalent tethering of the monomers as a thioester and oxoester onto the nps3 thiolation (T) and thioesterase (TE) domains, respectively, and symmetric C-C-bond formation between two monomers catalyzed by the nps3 TE domain leads to atromentin. Follow-up products of atromentin in S.lacrymans include atromentic acid, xerocomic acid, isoxerocomic acid and variegatic acid. This is Atromentin synthetase nps3 (nps3) from Serpula lacrymans var. lacrymans (strain S7.9) (Dry rot fungus).